A 72-amino-acid polypeptide reads, in one-letter code: Brevinin-2SN4 (72 aa).

The N-terminal stretch at 1–22 (MFTMKKPMLLLFFLGMISMSLC) is a signal peptide. A propeptide spans 23–40 (QDERGADEDDGGEMTEEE) (removed in mature form). A disulfide bond links Cys66 and Cys72.

Belongs to the frog skin active peptide (FSAP) family. Brevinin subfamily. In terms of tissue distribution, expressed by the skin glands.

The protein localises to the secreted. Antimicrobial peptide. Active against a variety of Gram-negative and Gram-positive bacterial strains. Not active against fungi. Shows very weak hemolytic activity against human erythrocytes. The chain is Brevinin-2SN4 from Sylvirana spinulosa (Fine-spined frog).